The chain runs to 425 residues: RNA polymerase sigma factor SigA (425 aa).

Residues 193 to 263 (MVQSNLRLVV…TRAIADQSRT (71 aa)) form a sigma-70 factor domain-2 region. The short motif at 217 to 220 (DLIQ) is the Interaction with polymerase core subunit RpoC element. The segment at 272–347 (ETISRIKKTT…EADGETPEDE (76 aa)) is sigma-70 factor domain-3. Positions 360–413 (VLDTLSPRERDVLRLRYGLDDGRMKTLEEIGQIFNVTRERIRQIEAKALRKLRH) are sigma-70 factor domain-4. The H-T-H motif DNA-binding region spans 386–405 (LEEIGQIFNVTRERIRQIEA).

It belongs to the sigma-70 factor family. RpoD/SigA subfamily. Interacts transiently with the RNA polymerase catalytic core.

The protein localises to the cytoplasm. In terms of biological role, sigma factors are initiation factors that promote the attachment of RNA polymerase to specific initiation sites and are then released. This sigma factor is the primary sigma factor during exponential growth. This is RNA polymerase sigma factor SigA from Synechocystis sp. (strain ATCC 27184 / PCC 6803 / Kazusa).